A 129-amino-acid chain; its full sequence is Ribosome-binding factor A (129 aa).

The protein belongs to the RbfA family. In terms of assembly, monomer. Binds 30S ribosomal subunits, but not 50S ribosomal subunits or 70S ribosomes.

The protein resides in the cytoplasm. Functionally, one of several proteins that assist in the late maturation steps of the functional core of the 30S ribosomal subunit. Associates with free 30S ribosomal subunits (but not with 30S subunits that are part of 70S ribosomes or polysomes). Required for efficient processing of 16S rRNA. May interact with the 5'-terminal helix region of 16S rRNA. The protein is Ribosome-binding factor A of Azotobacter vinelandii (strain DJ / ATCC BAA-1303).